Reading from the N-terminus, the 550-residue chain is Chaperonin GroEL (550 aa).

Residues 30–33 (TLGP), K51, 87–91 (DGTTT), G415, and D495 each bind ATP.

This sequence belongs to the chaperonin (HSP60) family. As to quaternary structure, forms a cylinder of 14 subunits composed of two heptameric rings stacked back-to-back. Interacts with the co-chaperonin GroES.

It localises to the cytoplasm. It catalyses the reaction ATP + H2O + a folded polypeptide = ADP + phosphate + an unfolded polypeptide.. Together with its co-chaperonin GroES, plays an essential role in assisting protein folding. The GroEL-GroES system forms a nano-cage that allows encapsulation of the non-native substrate proteins and provides a physical environment optimized to promote and accelerate protein folding. This chain is Chaperonin GroEL, found in Shewanella woodyi (strain ATCC 51908 / MS32).